The chain runs to 209 residues: Large ribosomal subunit protein uL3 (209 aa).

Residues 133–152 are disordered; sequence THGNSLSHRVPGSIGQNQTP. N5-methylglutamine is present on Gln150.

Belongs to the universal ribosomal protein uL3 family. As to quaternary structure, part of the 50S ribosomal subunit. Forms a cluster with proteins L14 and L19. In terms of processing, methylated by PrmB.

Its function is as follows. One of the primary rRNA binding proteins, it binds directly near the 3'-end of the 23S rRNA, where it nucleates assembly of the 50S subunit. This is Large ribosomal subunit protein uL3 from Yersinia pseudotuberculosis serotype O:1b (strain IP 31758).